The primary structure comprises 259 residues: Aminoglycoside 3'-phosphotransferase (259 aa).

The active-site Proton acceptor is the Asp-187.

Belongs to the aminoglycoside phosphotransferase family.

It carries out the reaction kanamycin A + ATP = kanamycin 3'-phosphate + ADP + H(+). Resistance to kanamycin and structurally-related aminoglycosides, including amikacin. The polypeptide is Aminoglycoside 3'-phosphotransferase (aphA-6) (Acinetobacter baumannii).